The chain runs to 322 residues: MIDLFRRYYRENNIDPPELISKREVGYMTFSGEVIRHLKINNRFELNMLLRDAAPMHVYSSAAYYRKPDERKMPEKEWGGADLIFDLDSDHLPGSEKLSQKEMLIQIRDQTERLVSDFLIADFGIPKSSIKIYFSGNRGYHVHISDDRVYRLGSDARREITDYITGNSLDETVVRRAIDMLGIASGGWPAVVSKELGEASPANQRRESDLRKAIKRARENHSVLIDSPVTYDIHRIIRMPNTLHGKSGLIVKEVEIDHLGEFDPFQECIPDQFRDGEYDVFLPEKIKPVEIGGIESPKMPGKHRVKTFMAVYLVASGRAVFP.

Active-site residues include D86, D88, and D226.

This sequence belongs to the eukaryotic-type primase small subunit family. Heterodimer of a small subunit (PriS) and a large subunit (PriL). It depends on Mg(2+) as a cofactor. The cofactor is Mn(2+).

Catalytic subunit of DNA primase, an RNA polymerase that catalyzes the synthesis of short RNA molecules used as primers for DNA polymerase during DNA replication. The small subunit contains the primase catalytic core and has DNA synthesis activity on its own. Binding to the large subunit stabilizes and modulates the activity, increasing the rate of DNA synthesis while decreasing the length of the DNA fragments, and conferring RNA synthesis capability. The DNA polymerase activity may enable DNA primase to also catalyze primer extension after primer synthesis. May also play a role in DNA repair. The polypeptide is DNA primase small subunit PriS (Thermoplasma acidophilum (strain ATCC 25905 / DSM 1728 / JCM 9062 / NBRC 15155 / AMRC-C165)).